Consider the following 442-residue polypeptide: L-seryl-tRNA(Sec) selenium transferase (442 aa).

K284 carries the post-translational modification N6-(pyridoxal phosphate)lysine.

The protein belongs to the SelA family. Pyridoxal 5'-phosphate is required as a cofactor.

It is found in the cytoplasm. It carries out the reaction L-seryl-tRNA(Sec) + selenophosphate + H(+) = L-selenocysteinyl-tRNA(Sec) + phosphate. The protein operates within aminoacyl-tRNA biosynthesis; selenocysteinyl-tRNA(Sec) biosynthesis; selenocysteinyl-tRNA(Sec) from L-seryl-tRNA(Sec) (bacterial route): step 1/1. Functionally, converts seryl-tRNA(Sec) to selenocysteinyl-tRNA(Sec) required for selenoprotein biosynthesis. The sequence is that of L-seryl-tRNA(Sec) selenium transferase from Campylobacter fetus subsp. fetus (strain 82-40).